Reading from the N-terminus, the 245-residue chain is 1-(5-phosphoribosyl)-5-[(5-phosphoribosylamino)methylideneamino] imidazole-4-carboxamide isomerase (245 aa).

D7 functions as the Proton acceptor in the catalytic mechanism. D129 acts as the Proton donor in catalysis.

This sequence belongs to the HisA/HisF family.

Its subcellular location is the cytoplasm. It catalyses the reaction 1-(5-phospho-beta-D-ribosyl)-5-[(5-phospho-beta-D-ribosylamino)methylideneamino]imidazole-4-carboxamide = 5-[(5-phospho-1-deoxy-D-ribulos-1-ylimino)methylamino]-1-(5-phospho-beta-D-ribosyl)imidazole-4-carboxamide. Its pathway is amino-acid biosynthesis; L-histidine biosynthesis; L-histidine from 5-phospho-alpha-D-ribose 1-diphosphate: step 4/9. The polypeptide is 1-(5-phosphoribosyl)-5-[(5-phosphoribosylamino)methylideneamino] imidazole-4-carboxamide isomerase (Shewanella sp. (strain MR-7)).